Here is a 132-residue protein sequence, read N- to C-terminus: D-ribose pyranase (132 aa).

The active-site Proton donor is histidine 20. Substrate contacts are provided by residues aspartate 28, histidine 98, and 120-122; that span reads YAN.

Belongs to the RbsD / FucU family. RbsD subfamily. In terms of assembly, homodecamer.

Its subcellular location is the cytoplasm. The catalysed reaction is beta-D-ribopyranose = beta-D-ribofuranose. The protein operates within carbohydrate metabolism; D-ribose degradation; D-ribose 5-phosphate from beta-D-ribopyranose: step 1/2. Catalyzes the interconversion of beta-pyran and beta-furan forms of D-ribose. In Geobacillus thermodenitrificans (strain NG80-2), this protein is D-ribose pyranase.